Here is a 186-residue protein sequence, read N- to C-terminus: ATP synthase subunit delta (186 aa).

The protein belongs to the ATPase delta chain family. As to quaternary structure, F-type ATPases have 2 components, F(1) - the catalytic core - and F(0) - the membrane proton channel. F(1) has five subunits: alpha(3), beta(3), gamma(1), delta(1), epsilon(1). CF(0) has four main subunits: a(1), b(1), b'(1) and c(10-14). The alpha and beta chains form an alternating ring which encloses part of the gamma chain. F(1) is attached to F(0) by a central stalk formed by the gamma and epsilon chains, while a peripheral stalk is formed by the delta, b and b' chains.

It is found in the cell inner membrane. F(1)F(0) ATP synthase produces ATP from ADP in the presence of a proton or sodium gradient. F-type ATPases consist of two structural domains, F(1) containing the extramembraneous catalytic core and F(0) containing the membrane proton channel, linked together by a central stalk and a peripheral stalk. During catalysis, ATP synthesis in the catalytic domain of F(1) is coupled via a rotary mechanism of the central stalk subunits to proton translocation. Its function is as follows. This protein is part of the stalk that links CF(0) to CF(1). It either transmits conformational changes from CF(0) to CF(1) or is implicated in proton conduction. This chain is ATP synthase subunit delta, found in Rhodopseudomonas palustris (strain BisB5).